The chain runs to 91 residues: MASTQPKNDAKSTEPKPEQPVTEKKTAVLEEDDEFEDFPVDDWEAEDTEAAKGNNEAKHLWEESWDDDDTSDDFSAQLKEELKKVEAAKKR.

The interval 1 to 73 is disordered; it reads MASTQPKNDA…SWDDDDTSDD (73 aa). The span at 8–28 shows a compositional bias: basic and acidic residues; that stretch reads NDAKSTEPKPEQPVTEKKTAV. Acidic residues-rich tracts occupy residues 29 to 48 and 63 to 72; these read LEED…AEDT and ESWDDDDTSD.

The protein belongs to the DSS1/SEM1 family. In terms of assembly, part of the 26S proteasome.

Functionally, subunit of the 26S proteasome which plays a role in ubiquitin-dependent proteolysis. This Neurospora crassa (strain ATCC 24698 / 74-OR23-1A / CBS 708.71 / DSM 1257 / FGSC 987) protein is Putative 26S proteasome complex subunit sem-1 (sem-1).